Here is a 103-residue protein sequence, read N- to C-terminus: Histone H4 (103 aa).

The span at 1–14 (MSGRGKGGKGLGKG) shows a compositional bias: gly residues. The disordered stretch occupies residues 1 to 20 (MSGRGKGGKGLGKGGAKRHR). The DNA-binding element occupies 17-21 (KRHRK).

It belongs to the histone H4 family. The nucleosome is a histone octamer containing two molecules each of H2A, H2B, H3 and H4 assembled in one H3-H4 heterotetramer and two H2A-H2B heterodimers. The octamer wraps approximately 147 bp of DNA.

The protein resides in the nucleus. The protein localises to the chromosome. Core component of nucleosome. Nucleosomes wrap and compact DNA into chromatin, limiting DNA accessibility to the cellular machineries which require DNA as a template. Histones thereby play a central role in transcription regulation, DNA repair, DNA replication and chromosomal stability. DNA accessibility is regulated via a complex set of post-translational modifications of histones, also called histone code, and nucleosome remodeling. The chain is Histone H4 (H4-I) from Volvox carteri (Green alga).